The chain runs to 283 residues: Rhomboid-like protease 2 (283 aa).

Residues 1-11 (MANIRTLSDYA) show a composition bias toward polar residues. Residues 1–26 (MANIRTLSDYASSPPRGSSALEGEVG) are disordered. 3 helical membrane-spanning segments follow: residues 62 to 82 (IIIISFVQIAVYIASLAAGLA), 114 to 134 (ICPLFLHLNLFHILMNLWVQI), and 149 to 169 (LLAVYFGVGVLANMISAAVLF). Serine 178 acts as the Nucleophile in catalysis. Helical transmembrane passes span 179-199 (TAVFALIGVQLAELALIWHAI), 205-225 (AIISVCICLFFVFVSSFGSHM), 227-247 (SVGHIGGLVMGFAAGIWLNEN), and 260-280 (LTSQVALAAAPILSCIFIFLV). The active site involves histidine 230.

This sequence belongs to the peptidase S54 family.

It is found in the membrane. It catalyses the reaction Cleaves type-1 transmembrane domains using a catalytic dyad composed of serine and histidine that are contributed by different transmembrane domains.. In terms of biological role, serine protease involved in intramembrane proteolysis and the subsequent release of polypeptides from their membrane anchors. The protein is Rhomboid-like protease 2 (ROM2) of Toxoplasma gondii.